The following is a 544-amino-acid chain: CTP synthase (544 aa).

The tract at residues 1 to 266 (MTKFIFVTGG…DDLICERFGL (266 aa)) is amidoligase domain. Residue serine 13 coordinates CTP. Serine 13 serves as a coordination point for UTP. Residues 14 to 19 (SLGKGI) and aspartate 71 each bind ATP. Mg(2+) is bound by residues aspartate 71 and glutamate 140. Residues 147–149 (DIE), 187–192 (KTKPTQ), and lysine 223 each bind CTP. UTP-binding positions include 187 to 192 (KTKPTQ) and lysine 223. Positions 291 to 543 (TVAMVGKYVE…VKAAKNYSEA (253 aa)) constitute a Glutamine amidotransferase type-1 domain. Position 354 (glycine 354) interacts with L-glutamine. The active-site Nucleophile; for glutamine hydrolysis is cysteine 381. L-glutamine contacts are provided by residues 382–385 (LGMQ), glutamate 404, and arginine 471. Residues histidine 516 and glutamate 518 contribute to the active site.

Belongs to the CTP synthase family. Homotetramer.

The enzyme catalyses UTP + L-glutamine + ATP + H2O = CTP + L-glutamate + ADP + phosphate + 2 H(+). It carries out the reaction L-glutamine + H2O = L-glutamate + NH4(+). The catalysed reaction is UTP + NH4(+) + ATP = CTP + ADP + phosphate + 2 H(+). It participates in pyrimidine metabolism; CTP biosynthesis via de novo pathway; CTP from UDP: step 2/2. Its activity is regulated as follows. Allosterically activated by GTP, when glutamine is the substrate; GTP has no effect on the reaction when ammonia is the substrate. The allosteric effector GTP functions by stabilizing the protein conformation that binds the tetrahedral intermediate(s) formed during glutamine hydrolysis. Inhibited by the product CTP, via allosteric rather than competitive inhibition. Its function is as follows. Catalyzes the ATP-dependent amination of UTP to CTP with either L-glutamine or ammonia as the source of nitrogen. Regulates intracellular CTP levels through interactions with the four ribonucleotide triphosphates. The protein is CTP synthase of Psychrobacter cryohalolentis (strain ATCC BAA-1226 / DSM 17306 / VKM B-2378 / K5).